The following is a 142-amino-acid chain: Transcriptional regulator MraZ (142 aa).

SpoVT-AbrB domains follow at residues 5 to 47 and 76 to 119; these read THSP…SERE and ASDE…DAQA.

The protein belongs to the MraZ family. Forms oligomers.

It localises to the cytoplasm. The protein localises to the nucleoid. In Arthrobacter sp. (strain FB24), this protein is Transcriptional regulator MraZ.